A 96-amino-acid chain; its full sequence is Small ribosomal subunit protein bS6 (96 aa).

Belongs to the bacterial ribosomal protein bS6 family.

Binds together with bS18 to 16S ribosomal RNA. This is Small ribosomal subunit protein bS6 from Streptomyces griseus subsp. griseus (strain JCM 4626 / CBS 651.72 / NBRC 13350 / KCC S-0626 / ISP 5235).